Consider the following 429-residue polypeptide: Adenylosuccinate synthetase (429 aa).

Residues 13–19 (GDEGKGK) and 41–43 (GHT) each bind GTP. Asp-14 serves as the catalytic Proton acceptor. The Mg(2+) site is built by Asp-14 and Gly-41. Residues 14–17 (DEGK), 39–42 (NAGH), Thr-130, Arg-144, Gln-225, Thr-240, and Arg-304 each bind IMP. Residue His-42 is the Proton donor of the active site. 300–306 (ATTGRAR) serves as a coordination point for substrate. GTP-binding positions include Arg-306, 332–334 (KLD), and 414–416 (STG).

The protein belongs to the adenylosuccinate synthetase family. In terms of assembly, homodimer. Mg(2+) is required as a cofactor.

It localises to the cytoplasm. The catalysed reaction is IMP + L-aspartate + GTP = N(6)-(1,2-dicarboxyethyl)-AMP + GDP + phosphate + 2 H(+). Its pathway is purine metabolism; AMP biosynthesis via de novo pathway; AMP from IMP: step 1/2. In terms of biological role, plays an important role in the de novo pathway of purine nucleotide biosynthesis. Catalyzes the first committed step in the biosynthesis of AMP from IMP. The sequence is that of Adenylosuccinate synthetase from Acidithiobacillus ferrooxidans (Thiobacillus ferrooxidans).